The following is a 416-amino-acid chain: 5-methylthioadenosine/S-adenosylhomocysteine deaminase 2 (416 aa).

2 residues coordinate Zn(2+): H58 and H60. 2 residues coordinate substrate: E86 and H178. H205 is a Zn(2+) binding site. Substrate-binding residues include E208 and D293. Residue D293 coordinates Zn(2+).

Belongs to the metallo-dependent hydrolases superfamily. MTA/SAH deaminase family. The cofactor is Zn(2+).

The enzyme catalyses S-adenosyl-L-homocysteine + H2O + H(+) = S-inosyl-L-homocysteine + NH4(+). It catalyses the reaction S-methyl-5'-thioadenosine + H2O + H(+) = S-methyl-5'-thioinosine + NH4(+). Functionally, catalyzes the deamination of 5-methylthioadenosine and S-adenosyl-L-homocysteine into 5-methylthioinosine and S-inosyl-L-homocysteine, respectively. Is also able to deaminate adenosine. The protein is 5-methylthioadenosine/S-adenosylhomocysteine deaminase 2 of Archaeoglobus fulgidus (strain ATCC 49558 / DSM 4304 / JCM 9628 / NBRC 100126 / VC-16).